The chain runs to 278 residues: HTH-type transcriptional activator RhaS (278 aa).

An HTH araC/xylS-type domain is found at 174–272 (NQLMAWLEDH…NWSPRDIRQG (99 aa)). DNA-binding regions (H-T-H motif) lie at residues 191–212 (EAVA…KQHT) and 239–262 (VTEI…RREF).

As to quaternary structure, binds DNA as a dimer.

Its subcellular location is the cytoplasm. Activates expression of the rhaBAD and rhaT operons. The chain is HTH-type transcriptional activator RhaS from Salmonella agona (strain SL483).